The chain runs to 409 residues: Astacin-like metalloendopeptidase (409 aa).

An N-terminal signal peptide occupies residues 1–19 (MDLKMLLIFIAFLLPSVLG). Positions 30–39 (TATTESTQVT) are enriched in low complexity. The disordered stretch occupies residues 30 to 54 (TATTESTQVTTEEDIYDSPSPAETD). The region spanning 87–285 (SAINCRNCYW…AKINRLYNCS (199 aa)) is the Peptidase M12A domain. Intrachain disulfides connect cysteine 91/cysteine 94, cysteine 134/cysteine 284, cysteine 155/cysteine 175, cysteine 287/cysteine 313, and cysteine 339/cysteine 362. Histidine 183 contributes to the Zn(2+) binding site. The active site involves glutamate 184. Residues histidine 187 and histidine 193 each contribute to the Zn(2+) site. The region spanning 287-399 (CSTIIDAAFG…SGFQATFTSA (113 aa)) is the CUB domain.

Requires Zn(2+) as cofactor. As to expression, expressed in ovary and gonads.

The protein localises to the cytoplasm. It localises to the cell membrane. The protein resides in the cytoplasmic vesicle. It is found in the secretory vesicle. Its subcellular location is the cortical granule. Its function is as follows. Probable oocyte-specific oolemmal receptor involved in sperm and egg adhesion and fertilization. May act as a protease. This Gallus gallus (Chicken) protein is Astacin-like metalloendopeptidase (ASTL).